The chain runs to 281 residues: Nucleoid occlusion protein (281 aa).

The segment at 1–26 (MKHPFSRLFSFGEKEQEEAGGKQERE) is disordered. A compositionally biased stretch (basic and acidic residues) spans 12–26 (GEKEQEEAGGKQERE). Residues 145 to 164 (EALAQRLGKGQSTIANKLRL) constitute a DNA-binding region (H-T-H motif).

The protein belongs to the ParB family.

Its subcellular location is the cytoplasm. The protein localises to the nucleoid. Effects nucleoid occlusion by binding relatively nonspecifically to DNA and preventing the assembly of the division machinery in the vicinity of the nucleoid, especially under conditions that disturb the cell cycle. It helps to coordinate cell division and chromosome segregation by preventing the formation of the Z ring through the nucleoid, which would cause chromosome breakage. In Geobacillus thermodenitrificans (strain NG80-2), this protein is Nucleoid occlusion protein.